A 423-amino-acid polypeptide reads, in one-letter code: Glucose-1-phosphate adenylyltransferase (423 aa).

Residues Tyr-98, Gly-163, Glu-178–Lys-179, and Ser-189 contribute to the alpha-D-glucose 1-phosphate site.

It belongs to the bacterial/plant glucose-1-phosphate adenylyltransferase family. In terms of assembly, homotetramer.

It catalyses the reaction alpha-D-glucose 1-phosphate + ATP + H(+) = ADP-alpha-D-glucose + diphosphate. Its pathway is glycan biosynthesis; glycogen biosynthesis. Functionally, involved in the biosynthesis of ADP-glucose, a building block required for the elongation reactions to produce glycogen. Catalyzes the reaction between ATP and alpha-D-glucose 1-phosphate (G1P) to produce pyrophosphate and ADP-Glc. The polypeptide is Glucose-1-phosphate adenylyltransferase (Thermotoga neapolitana (strain ATCC 49049 / DSM 4359 / NBRC 107923 / NS-E)).